Here is a 204-residue protein sequence, read N- to C-terminus: Lysozyme g (204 aa).

The signal sequence occupies residues 1–19 (MHLMLVLLGLAALLGTSQS). 2 cysteine pairs are disulfide-bonded: Cys-23-Cys-79 and Cys-37-Cys-48. Catalysis depends on residues Glu-92 and Asp-105.

This sequence belongs to the glycosyl hydrolase 23 family.

The protein localises to the secreted. The enzyme catalyses Hydrolysis of (1-&gt;4)-beta-linkages between N-acetylmuramic acid and N-acetyl-D-glucosamine residues in a peptidoglycan and between N-acetyl-D-glucosamine residues in chitodextrins.. Its function is as follows. Has bacteriolytic activity against M.luteus. This chain is Lysozyme g, found in Struthio camelus (Common ostrich).